The sequence spans 463 residues: Glutamate--tRNA ligase (463 aa).

The 'HIGH' region motif lies at 10 to 20 (PSPTGYLHIGG). The short motif at 252 to 256 (KLSKR) is the 'KMSKS' region element. K255 lines the ATP pocket.

This sequence belongs to the class-I aminoacyl-tRNA synthetase family. Glutamate--tRNA ligase type 1 subfamily. In terms of assembly, monomer.

The protein resides in the cytoplasm. The enzyme catalyses tRNA(Glu) + L-glutamate + ATP = L-glutamyl-tRNA(Glu) + AMP + diphosphate. In terms of biological role, catalyzes the attachment of glutamate to tRNA(Glu) in a two-step reaction: glutamate is first activated by ATP to form Glu-AMP and then transferred to the acceptor end of tRNA(Glu). The chain is Glutamate--tRNA ligase from Mycoplasmopsis agalactiae (strain NCTC 10123 / CIP 59.7 / PG2) (Mycoplasma agalactiae).